The chain runs to 157 residues: Arginine repressor (157 aa).

It belongs to the ArgR family.

Its subcellular location is the cytoplasm. It participates in amino-acid biosynthesis; L-arginine biosynthesis [regulation]. Regulates arginine biosynthesis genes. The polypeptide is Arginine repressor (Deinococcus radiodurans (strain ATCC 13939 / DSM 20539 / JCM 16871 / CCUG 27074 / LMG 4051 / NBRC 15346 / NCIMB 9279 / VKM B-1422 / R1)).